Consider the following 452-residue polypeptide: uncharacterized protein (452 aa).

The first 20 residues, 1 to 20, serve as a signal peptide directing secretion; sequence MQFFGSLFVSLLGAAGLANA. The disordered stretch occupies residues 130–151; the sequence is TQSSSNSTSTMNSTGSVSGGSV.

It localises to the endoplasmic reticulum. This is an uncharacterized protein from Schizosaccharomyces pombe (strain 972 / ATCC 24843) (Fission yeast).